The primary structure comprises 268 residues: Indole-3-glycerol phosphate synthase 2 (268 aa).

It belongs to the TrpC family.

It catalyses the reaction 1-(2-carboxyphenylamino)-1-deoxy-D-ribulose 5-phosphate + H(+) = (1S,2R)-1-C-(indol-3-yl)glycerol 3-phosphate + CO2 + H2O. The protein operates within amino-acid biosynthesis; L-tryptophan biosynthesis; L-tryptophan from chorismate: step 4/5. The protein is Indole-3-glycerol phosphate synthase 2 (trpC2) of Ralstonia nicotianae (strain ATCC BAA-1114 / GMI1000) (Ralstonia solanacearum).